Here is a 605-residue protein sequence, read N- to C-terminus: MALSSTEVNRIRNFCIIAHIDHGKSTLADRLLEITHTLDRTQMASAQVLDDMDLERERGITIKSHAIQMKYRASDGLEYTLNLIDTPGHVDFSYEVSRSLAACEGALLIVDATQGVEAQTIANLYLALDAGLDIIPVINKIDLPSSDVEGVARQVMDLIGIKREEILQVSAKAGIGVPELIEAIVQRIPAPADNNHLPLRALIFDSVFDSYRGAVIYLRIVEGSLKKGDRVKFFASNKIFFAEEIGTMSMKRQPKSLLESGDVGYLICSIKDVKDAKVGDTVTLADNPAHERLSGYKEVKPMVFSGLYPINSNEFEDLRESLEKLALNDASLLYTPETSVALGFGFRCGFLGLLHMEIIQERLEREYGVNIITTVPNVEYRVVMTNGEVVIVDNPSKMPDTGRINLVEEPYVTMQIITLADYIGNIMKLGMERRGEYKNTDYLDTTRVIMHFEFPLAEIVFDFHDRLKSISKGYASMDYEYIGYRDSDLVKLDVLLNGETVDALSIVVHRSKAYDWGKKLCLKLKGIIPKQMYEVAIQAAIGSKVISRETISAMRKNVLAKCYGGDISRKRKLLEKQKEGKKRMKQVGRVEVPQEAFLALLNIDE.

Residues 9–192 (NRIRNFCIIA…AIVQRIPAPA (184 aa)) form the tr-type G domain. Residues 21–26 (DHGKST) and 139–142 (NKID) contribute to the GTP site.

The protein belongs to the TRAFAC class translation factor GTPase superfamily. Classic translation factor GTPase family. LepA subfamily.

The protein resides in the cell inner membrane. It catalyses the reaction GTP + H2O = GDP + phosphate + H(+). In terms of biological role, required for accurate and efficient protein synthesis under certain stress conditions. May act as a fidelity factor of the translation reaction, by catalyzing a one-codon backward translocation of tRNAs on improperly translocated ribosomes. Back-translocation proceeds from a post-translocation (POST) complex to a pre-translocation (PRE) complex, thus giving elongation factor G a second chance to translocate the tRNAs correctly. Binds to ribosomes in a GTP-dependent manner. This chain is Elongation factor 4, found in Pelodictyon phaeoclathratiforme (strain DSM 5477 / BU-1).